Here is a 334-residue protein sequence, read N- to C-terminus: Serine/Arginine-related protein 53 (334 aa).

Over residues 1–13 the composition is skewed to basic and acidic residues; sequence MGRRSSDTEEESR. Disordered regions lie at residues 1–179, 201–220, and 243–290; these read MGRR…HLPP, LKAK…EDQA, and QTFR…SIPT. Basic residues-rich tracts occupy residues 14-24 and 35-50; these read SKRKKKHRRRS and YSRK…KSRS. Positions 51–62 are enriched in basic and acidic residues; sequence WSRDLQPRSHSY. Residues 78–118 show a composition bias toward basic residues; the sequence is SRRKRSRSRSRGRGKSYRVQRSRSKSRTRRSRSRPRLRSHS. Composition is skewed to basic and acidic residues over residues 132-166, 201-218, and 247-259; these read RSRD…KRGE, LKAK…KEED, and SSKE…EPSE. Residues 180–236 adopt a coiled-coil conformation; that stretch reads AEQAKARLQLVLEAAAKADEALKAKERNEEEAKRRKEEDQATLVEQVKRVKEIEAIE.

In terms of assembly, interacts (via Arg/Ser-rich domain) with LUC7L3, RBM39 and RSF1. Post-translationally, phosphorylated. As to expression, widely expressed. Expressed in brain, spinal cord, cerebellum.

It localises to the nucleus. The protein localises to the nucleus speckle. The protein resides in the cytoplasm. Functionally, has a role in alternative splicing and transcription regulation. Involved in both constitutive and alternative pre-mRNA splicing. May have a role in the recognition of the 3' splice site during the second step of splicing. This is Serine/Arginine-related protein 53 (RSRC1) from Homo sapiens (Human).